Here is a 342-residue protein sequence, read N- to C-terminus: DNA-directed RNA polymerase subunit alpha (342 aa).

The segment at 1–239 (MTTFLAKNWS…DQLQVFINFQ (239 aa)) is alpha N-terminal domain (alpha-NTD). The interval 254-342 (INPVLLKKVY…SLAKKHEDQY (89 aa)) is alpha C-terminal domain (alpha-CTD).

It belongs to the RNA polymerase alpha chain family. As to quaternary structure, homodimer. The RNAP catalytic core consists of 2 alpha, 1 beta, 1 beta' and 1 omega subunit. When a sigma factor is associated with the core the holoenzyme is formed, which can initiate transcription.

The catalysed reaction is RNA(n) + a ribonucleoside 5'-triphosphate = RNA(n+1) + diphosphate. DNA-dependent RNA polymerase catalyzes the transcription of DNA into RNA using the four ribonucleoside triphosphates as substrates. The sequence is that of DNA-directed RNA polymerase subunit alpha from Orientia tsutsugamushi (strain Ikeda) (Rickettsia tsutsugamushi).